A 178-amino-acid polypeptide reads, in one-letter code: MKLLLCLGLTLVCIHAEEATSKGQNLNVEKINGEWFSILLASDKREKIEEHGSMRVFVEHIHVLENSLAFKFHTVIDGECSEIFLVADKTEKAGEYSVMYDGFNTFTILKTDYDNYIMFHLINEKDGKTFQLMELYGRKADLNSDIKEKFVKLCEEHGIIKENIIDLTKTNRCLKARE.

A signal peptide spans 1 to 16; the sequence is MKLLLCLGLTLVCIHA. Cys-80 and Cys-173 are joined by a disulfide.

Belongs to the calycin superfamily. Lipocalin family. As to expression, expressed in lacrimal gland, parotid gland, sublingual gland, nasal mucus, and vomeronasal organ.

It localises to the secreted. Binds pheromones, likely to displace pheromones complexed to urinary MUPs and transport them to the vomeronasal organ (VNO) where they associate with their neuronal receptor(s). MUP4 is highly specific for the male mouse pheromone 2-sec-butyl-4,5-dihydrothiazole (SBT). This is Major urinary protein 4 (Mup4) from Mus musculus (Mouse).